Consider the following 101-residue polypeptide: Cell division suppressor protein YneA (101 aa).

Residues 35 to 86 form the LysM domain; the sequence is MTVTVASGDTLWGLAKQYEPAHGLSPDEFIRWVVDVNRLPSSRLTAGEQIVI.

Belongs to the YneA family.

It is found in the cytoplasm. Functionally, inhibits cell division during the SOS response. Affects a later stage of the cell division protein assembly, after the assembly of the Z ring, by probably suppressing recruitment of FtsL and/or DivIC to the division machinery. This chain is Cell division suppressor protein YneA, found in Geobacillus thermodenitrificans (strain NG80-2).